Here is a 288-residue protein sequence, read N- to C-terminus: Pyridoxal kinase PdxY (288 aa).

Residues serine 9 and 44–45 (TQ) each bind substrate. Positions 111, 148, and 181 each coordinate ATP. A substrate-binding site is contributed by aspartate 224.

It belongs to the pyridoxine kinase family. PdxY subfamily. Homodimer. The cofactor is Mg(2+).

The enzyme catalyses pyridoxal + ATP = pyridoxal 5'-phosphate + ADP + H(+). The protein operates within cofactor metabolism; pyridoxal 5'-phosphate salvage; pyridoxal 5'-phosphate from pyridoxal: step 1/1. Pyridoxal kinase involved in the salvage pathway of pyridoxal 5'-phosphate (PLP). Catalyzes the phosphorylation of pyridoxal to PLP. This is Pyridoxal kinase PdxY from Haemophilus influenzae (strain ATCC 51907 / DSM 11121 / KW20 / Rd).